The following is a 305-amino-acid chain: Lipoyl synthase (305 aa).

Residues C41, C46, C52, C68, C72, C75, and S281 each coordinate [4Fe-4S] cluster. The 217-residue stretch at 54-270 folds into the Radical SAM core domain; the sequence is GARRTATFMI…RKVAMDKGFK (217 aa). Residues 283–298 are compositionally biased toward basic and acidic residues; the sequence is HADEQVNEAAKEKQRQ. Residues 283-305 are disordered; it reads HADEQVNEAAKEKQRQGEAQLNS.

The protein belongs to the radical SAM superfamily. Lipoyl synthase family. It depends on [4Fe-4S] cluster as a cofactor.

It localises to the cytoplasm. It catalyses the reaction [[Fe-S] cluster scaffold protein carrying a second [4Fe-4S](2+) cluster] + N(6)-octanoyl-L-lysyl-[protein] + 2 oxidized [2Fe-2S]-[ferredoxin] + 2 S-adenosyl-L-methionine + 4 H(+) = [[Fe-S] cluster scaffold protein] + N(6)-[(R)-dihydrolipoyl]-L-lysyl-[protein] + 4 Fe(3+) + 2 hydrogen sulfide + 2 5'-deoxyadenosine + 2 L-methionine + 2 reduced [2Fe-2S]-[ferredoxin]. It participates in protein modification; protein lipoylation via endogenous pathway; protein N(6)-(lipoyl)lysine from octanoyl-[acyl-carrier-protein]. In terms of biological role, catalyzes the radical-mediated insertion of two sulfur atoms into the C-6 and C-8 positions of the octanoyl moiety bound to the lipoyl domains of lipoate-dependent enzymes, thereby converting the octanoylated domains into lipoylated derivatives. This Staphylococcus aureus (strain Mu3 / ATCC 700698) protein is Lipoyl synthase.